Here is a 178-residue protein sequence, read N- to C-terminus: ATP synthase subunit delta (178 aa).

Belongs to the ATPase delta chain family. In terms of assembly, F-type ATPases have 2 components, F(1) - the catalytic core - and F(0) - the membrane proton channel. F(1) has five subunits: alpha(3), beta(3), gamma(1), delta(1), epsilon(1). F(0) has three main subunits: a(1), b(2) and c(10-14). The alpha and beta chains form an alternating ring which encloses part of the gamma chain. F(1) is attached to F(0) by a central stalk formed by the gamma and epsilon chains, while a peripheral stalk is formed by the delta and b chains.

It localises to the cell membrane. F(1)F(0) ATP synthase produces ATP from ADP in the presence of a proton or sodium gradient. F-type ATPases consist of two structural domains, F(1) containing the extramembraneous catalytic core and F(0) containing the membrane proton channel, linked together by a central stalk and a peripheral stalk. During catalysis, ATP synthesis in the catalytic domain of F(1) is coupled via a rotary mechanism of the central stalk subunits to proton translocation. Functionally, this protein is part of the stalk that links CF(0) to CF(1). It either transmits conformational changes from CF(0) to CF(1) or is implicated in proton conduction. This is ATP synthase subunit delta from Streptococcus pyogenes serotype M49 (strain NZ131).